A 145-amino-acid polypeptide reads, in one-letter code: ATP synthase epsilon chain (145 aa).

It belongs to the ATPase epsilon chain family. In terms of assembly, F-type ATPases have 2 components, CF(1) - the catalytic core - and CF(0) - the membrane proton channel. CF(1) has five subunits: alpha(3), beta(3), gamma(1), delta(1), epsilon(1). CF(0) has three main subunits: a, b and c.

The protein localises to the cell inner membrane. Its function is as follows. Produces ATP from ADP in the presence of a proton gradient across the membrane. This chain is ATP synthase epsilon chain, found in Francisella tularensis subsp. holarctica (strain FTNF002-00 / FTA).